Reading from the N-terminus, the 68-residue chain is Large ribosomal subunit protein bL32 (68 aa).

The interval 1–24 is disordered; it reads MAVPQNRVTRSRRNMRRSHDALVA.

This sequence belongs to the bacterial ribosomal protein bL32 family.

The sequence is that of Large ribosomal subunit protein bL32 from Paracoccus denitrificans (strain Pd 1222).